A 564-amino-acid chain; its full sequence is Apyrase (564 aa).

An N-terminal signal peptide occupies residues 1-25; it reads MAGKPGIQLFVIFLLLSSFAAVVWA. A divalent metal cation contacts are provided by D48, H50, D99, N131, H234, and H258. Residue R371 participates in AMP binding. Residue N391 is glycosylated (N-linked (GlcNAc...) asparagine). Residues R406, F425, and D515 each coordinate AMP.

This sequence belongs to the 5'-nucleotidase family. The cofactor is a divalent metal cation. As to expression, female salivary gland (at protein level). Low-level expression in male tissues. Not detected in female carcasses without salivary glands.

It is found in the secreted. The enzyme catalyses a ribonucleoside 5'-triphosphate + 2 H2O = a ribonucleoside 5'-phosphate + 2 phosphate + 2 H(+). Facilitates hematophagy by inhibiting ADP-dependent platelet aggregation in the host. Cleaves adenosine triphosphate (ATP) and adenosine diphosphate (ADP) to adenosine monophosphate (AMP) and inorganic phosphate. May reduce probing time by facilitating the speed of locating blood. This Aedes albopictus (Asian tiger mosquito) protein is Apyrase.